The chain runs to 101 residues: Small ribosomal subunit protein uS14 (101 aa).

The segment at 1–25 is disordered; sequence MAKVSAIQKNKSRQKKSQRLHNKRS. Basic residues predominate over residues 10–25; the sequence is NKSRQKKSQRLHNKRS.

This sequence belongs to the universal ribosomal protein uS14 family. In terms of assembly, part of the 30S ribosomal subunit. Contacts proteins S3 and S10.

Its function is as follows. Binds 16S rRNA, required for the assembly of 30S particles and may also be responsible for determining the conformation of the 16S rRNA at the A site. The polypeptide is Small ribosomal subunit protein uS14 (Rickettsia typhi (strain ATCC VR-144 / Wilmington)).